A 340-amino-acid polypeptide reads, in one-letter code: Ketol-acid reductoisomerase (NADP(+)) (340 aa).

The KARI N-terminal Rossmann domain occupies 3–182 (VQMEYEKDVK…GAARVGLLET (180 aa)). NADP(+)-binding positions include 26 to 29 (YGSQ), R49, S53, and 83 to 86 (DEIQ). The active site involves H108. Residue G134 participates in NADP(+) binding. The KARI C-terminal knotted domain maps to 183–328 (TYKEETEEDL…AELRKAMPFV (146 aa)). D191, E195, E227, and E231 together coordinate Mg(2+). Position 252 (S252) interacts with substrate.

Belongs to the ketol-acid reductoisomerase family. Mg(2+) is required as a cofactor.

The enzyme catalyses (2R)-2,3-dihydroxy-3-methylbutanoate + NADP(+) = (2S)-2-acetolactate + NADPH + H(+). It catalyses the reaction (2R,3R)-2,3-dihydroxy-3-methylpentanoate + NADP(+) = (S)-2-ethyl-2-hydroxy-3-oxobutanoate + NADPH + H(+). It functions in the pathway amino-acid biosynthesis; L-isoleucine biosynthesis; L-isoleucine from 2-oxobutanoate: step 2/4. It participates in amino-acid biosynthesis; L-valine biosynthesis; L-valine from pyruvate: step 2/4. Involved in the biosynthesis of branched-chain amino acids (BCAA). Catalyzes an alkyl-migration followed by a ketol-acid reduction of (S)-2-acetolactate (S2AL) to yield (R)-2,3-dihydroxy-isovalerate. In the isomerase reaction, S2AL is rearranged via a Mg-dependent methyl migration to produce 3-hydroxy-3-methyl-2-ketobutyrate (HMKB). In the reductase reaction, this 2-ketoacid undergoes a metal-dependent reduction by NADPH to yield (R)-2,3-dihydroxy-isovalerate. This chain is Ketol-acid reductoisomerase (NADP(+)), found in Streptococcus thermophilus (strain ATCC BAA-491 / LMD-9).